The chain runs to 176 residues: ATP-dependent protease subunit HslV (176 aa).

Residue Thr-2 is part of the active site. Na(+)-binding residues include Ser-157, Cys-160, and Thr-163.

The protein belongs to the peptidase T1B family. HslV subfamily. As to quaternary structure, a double ring-shaped homohexamer of HslV is capped on each side by a ring-shaped HslU homohexamer. The assembly of the HslU/HslV complex is dependent on binding of ATP.

The protein localises to the cytoplasm. It catalyses the reaction ATP-dependent cleavage of peptide bonds with broad specificity.. Allosterically activated by HslU binding. In terms of biological role, protease subunit of a proteasome-like degradation complex believed to be a general protein degrading machinery. This chain is ATP-dependent protease subunit HslV, found in Buchnera aphidicola subsp. Baizongia pistaciae (strain Bp).